The chain runs to 207 residues: Inhibitor of hydrogen peroxide resistance (207 aa).

The H-T-H motif DNA-binding region spans 163-182 (MNYIHQRTRVSRSVVAEVLA).

Belongs to the IprA family.

Functionally, involved in oxidative stress resistance. The chain is Inhibitor of hydrogen peroxide resistance from Salmonella typhimurium (strain LT2 / SGSC1412 / ATCC 700720).